We begin with the raw amino-acid sequence, 186 residues long: Large ribosomal subunit protein uL22 (186 aa).

Positions 161 to 186 (VDDEPAKKKLSKKKLQRQKEKMLRSE) are disordered. Positions 177–186 (RQKEKMLRSE) are enriched in basic and acidic residues.

It belongs to the universal ribosomal protein uL22 family.

In Drosophila pseudoobscura pseudoobscura (Fruit fly), this protein is Large ribosomal subunit protein uL22 (RpL17).